The following is a 350-amino-acid chain: Methionine import ATP-binding protein MetN (350 aa).

In terms of domain architecture, ABC transporter spans 2-241 (IQIKNLKKEY…PQAPVTRSFV (240 aa)). Residue 38–45 (GHSGAGKS) participates in ATP binding.

This sequence belongs to the ABC transporter superfamily. Methionine importer (TC 3.A.1.24) family. In terms of assembly, the complex is composed of two ATP-binding proteins (MetN), two transmembrane proteins (MetI) and a solute-binding protein (MetQ).

It is found in the cell inner membrane. The catalysed reaction is L-methionine(out) + ATP + H2O = L-methionine(in) + ADP + phosphate + H(+). It catalyses the reaction D-methionine(out) + ATP + H2O = D-methionine(in) + ADP + phosphate + H(+). Functionally, part of the ABC transporter complex MetNIQ involved in methionine import. Responsible for energy coupling to the transport system. The polypeptide is Methionine import ATP-binding protein MetN (Francisella tularensis subsp. holarctica (strain LVS)).